Consider the following 95-residue polypeptide: Co-chaperonin GroES (95 aa).

Belongs to the GroES chaperonin family. Heptamer of 7 subunits arranged in a ring. Interacts with the chaperonin GroEL.

It is found in the cytoplasm. Together with the chaperonin GroEL, plays an essential role in assisting protein folding. The GroEL-GroES system forms a nano-cage that allows encapsulation of the non-native substrate proteins and provides a physical environment optimized to promote and accelerate protein folding. GroES binds to the apical surface of the GroEL ring, thereby capping the opening of the GroEL channel. The chain is Co-chaperonin GroES from Rickettsia canadensis (strain McKiel).